A 462-amino-acid chain; its full sequence is Glutamate-1-semialdehyde 2,1-aminomutase (462 aa).

The interval aspartate 178 to valine 200 is disordered. Residues arginine 182 to arginine 192 show a composition bias toward low complexity. Lysine 297 bears the N6-(pyridoxal phosphate)lysine mark.

Belongs to the class-III pyridoxal-phosphate-dependent aminotransferase family. HemL subfamily. Homodimer. Pyridoxal 5'-phosphate is required as a cofactor.

It localises to the cytoplasm. It carries out the reaction (S)-4-amino-5-oxopentanoate = 5-aminolevulinate. It functions in the pathway porphyrin-containing compound metabolism; protoporphyrin-IX biosynthesis; 5-aminolevulinate from L-glutamyl-tRNA(Glu): step 2/2. In Mycobacterium bovis (strain ATCC BAA-935 / AF2122/97), this protein is Glutamate-1-semialdehyde 2,1-aminomutase (hemL).